The primary structure comprises 174 residues: Thiol-disulfide oxidoreductase ResA (174 aa).

Residues 11–30 (TAILLVLLAAIGYTIYTNFF) traverse the membrane as a helical; Signal-anchor for type II membrane protein segment. The 139-residue stretch at 36–174 (VAVGSTAPDF…IERHLESIKP (139 aa)) folds into the Thioredoxin domain. The cysteines at positions 74 and 77 are disulfide-linked.

This sequence belongs to the thioredoxin family. ResA subfamily.

It is found in the cell membrane. Its pathway is protein modification; cytochrome c assembly. In terms of biological role, thiol-disulfide oxidoreductase which is required in disulfide reduction during c-type cytochrome synthesis. May accept reducing equivalents from CcdA, leading to breakage of disulfide bonds in apocytochrome c; following this reduction heme can be covalently attached. The chain is Thiol-disulfide oxidoreductase ResA from Geobacillus kaustophilus (strain HTA426).